The following is a 355-amino-acid chain: Peptide chain release factor 1 (355 aa).

Glutamine 231 carries the post-translational modification N5-methylglutamine. The segment covering 280 to 291 has biased composition (basic and acidic residues); that stretch reads SERLAKESEARK. The interval 280–303 is disordered; it reads SERLAKESEARKSQVGSGDRSERI.

This sequence belongs to the prokaryotic/mitochondrial release factor family. In terms of processing, methylated by PrmC. Methylation increases the termination efficiency of RF1.

It is found in the cytoplasm. Functionally, peptide chain release factor 1 directs the termination of translation in response to the peptide chain termination codons UAG and UAA. The polypeptide is Peptide chain release factor 1 (Campylobacter jejuni subsp. jejuni serotype O:6 (strain 81116 / NCTC 11828)).